The following is a 326-amino-acid chain: Olfactory receptor 11H1 (326 aa).

At 1–44 (MCPLTLQVTGLMNVSEPNSSFAFVNEFILQGFSCEWTIQIFLFS) the chain is on the extracellular side. N-linked (GlcNAc...) asparagine glycans are attached at residues asparagine 13 and asparagine 18. A helical transmembrane segment spans residues 45-65 (LFTTTYALTITGNGAIAFVLW). Residues 66-72 (CDRRLHT) lie on the Cytoplasmic side of the membrane. Residues 73–93 (PMYMFLGNFSFLEIWYVSSTV) traverse the membrane as a helical segment. Topologically, residues 94–112 (PKMLVNFLSEKKNISFAGC) are extracellular. A glycan (N-linked (GlcNAc...) asparagine) is linked at asparagine 106. Residues cysteine 112 and cysteine 194 are joined by a disulfide bond. The chain crosses the membrane as a helical span at residues 113–133 (FLQFYFFFSLGTSECLLLTVM). Over 134–158 (AFDQYLAICRPLLYPNIMTGHLYAK) the chain is Cytoplasmic. Residues 159–179 (LVILCWVCGFLWFLIPIVLIS) traverse the membrane as a helical segment. Over 180–216 (QMPFCGPNIIDHVVCDPGPRFALDCVSAPRIQLFCYT) the chain is Extracellular. The helical transmembrane segment at 217 to 237 (LSSLVIFGNFLFIIGSYTLVL) threads the bilayer. The Cytoplasmic segment spans residues 238–259 (KAMLGMPSSTGRHKAFSTCGSH). A helical transmembrane segment spans residues 260 to 280 (LAVVSLCYSSLMVMYVSPGLG). At 281–287 (HSTGMQK) the chain is on the extracellular side. Residues 288–308 (IETLFYAMVTPLFNPLIYSLQ) form a helical membrane-spanning segment. At 309-326 (NKEIKAALRKVLGSSNII) the chain is on the cytoplasmic side.

The protein belongs to the G-protein coupled receptor 1 family.

The protein localises to the cell membrane. In terms of biological role, odorant receptor. The sequence is that of Olfactory receptor 11H1 (OR11H1) from Homo sapiens (Human).